We begin with the raw amino-acid sequence, 347 residues long: GMP reductase (347 aa).

Residue 108–131 (ADFQKTKDIMALTEDLIFICIDIA) coordinates NADP(+). G181 and G183 together coordinate K(+). The active-site Thioimidate intermediate is the C186. 216–239 (IIGDGGCSCAGDVSKAFGGGADFV) is a binding site for NADP(+).

This sequence belongs to the IMPDH/GMPR family. GuaC type 1 subfamily. In terms of assembly, homotetramer.

It carries out the reaction IMP + NH4(+) + NADP(+) = GMP + NADPH + 2 H(+). Functionally, catalyzes the irreversible NADPH-dependent deamination of GMP to IMP. It functions in the conversion of nucleobase, nucleoside and nucleotide derivatives of G to A nucleotides, and in maintaining the intracellular balance of A and G nucleotides. The sequence is that of GMP reductase from Photobacterium profundum (strain SS9).